We begin with the raw amino-acid sequence, 323 residues long: Putative gluconeogenesis factor (323 aa).

Belongs to the gluconeogenesis factor family.

It localises to the cytoplasm. In terms of biological role, required for morphogenesis under gluconeogenic growth conditions. This Thermoanaerobacterium thermosulfurigenes (Clostridium thermosulfurogenes) protein is Putative gluconeogenesis factor.